Here is a 523-residue protein sequence, read N- to C-terminus: Probable glucose-1-phosphate adenylyltransferase large subunit, chloroplastic (523 aa).

The protein belongs to the bacterial/plant glucose-1-phosphate adenylyltransferase family. As to quaternary structure, heterotetramer.

It is found in the plastid. The protein resides in the chloroplast. The enzyme catalyses alpha-D-glucose 1-phosphate + ATP + H(+) = ADP-alpha-D-glucose + diphosphate. It functions in the pathway glycan biosynthesis; starch biosynthesis. With respect to regulation, activated by 3'phosphoglycerate, inhibited by orthophosphate. Allosteric regulation. Its function is as follows. This protein plays a role in synthesis of starch. It catalyzes the synthesis of the activated glycosyl donor, ADP-glucose from Glc-1-P and ATP. The protein is Probable glucose-1-phosphate adenylyltransferase large subunit, chloroplastic of Arabidopsis thaliana (Mouse-ear cress).